A 425-amino-acid polypeptide reads, in one-letter code: MYEYSFNPNIDHEPGSVESQQSTIYSDSDDSDDSFLDDEVIPPKEQAMRKIEFALADIKRQMDNKEKSLTLRISTSKSHFCLRYTAKRKGKLDRDLHCLHQVYDLLENDKRSTKRELYYEHKAVYGNQKYLDSSIKSICELLNESRANLNILSCGRGIIRGAITFLVENVGVIDARVQEVLITDALLFSNIISEADFILVVEKDTTFQKLMDENFQAMFPRGILATSKGYPDIATRNVLKMLSEKRKFPIYGLFDADPHGIEIYLTYKYGPTKEFAEGRGAFVPTIEWIGLFPTDFHRFTIDQSQCLPLVRTDFVKIEKMIPRSIQLGEIVVTRELDWMIQNKFKMELESINMCGQEYMARFLIAPRVMSIEKEIPIQPETIINEYHEDSQCSLSTDDDREAKDDDYIDSDAEEKFQNMIDNDSD.

Positions methionine 1 to aspartate 38 are disordered. A Topo IIA-type catalytic domain is found at glycine 15 to isoleucine 158. Residues aspartate 27–aspartate 38 show a composition bias toward acidic residues. The O-(5'-phospho-DNA)-tyrosine intermediate role is filled by tyrosine 119. Mg(2+)-binding residues include glutamate 202 and aspartate 255.

This sequence belongs to the TOP6A family. Requires Mg(2+) as cofactor.

It localises to the nucleus. It carries out the reaction ATP-dependent breakage, passage and rejoining of double-stranded DNA.. Functionally, required for meiotic recombination. Mediates DNA cleavage that forms the double-strand breaks (DSB) that initiate meiotic recombination. This chain is Meiotic recombination protein spo-11 (spo-11), found in Caenorhabditis elegans.